We begin with the raw amino-acid sequence, 267 residues long: Transcription factor Spi-B (267 aa).

Residues 1–31 (MLALEAAQLDGPHLSCLYPEGVFYDLDSCKP) are TAD1 (Acidic). The tract at residues 41 to 62 (LDSTWGWTEAPPAPAIAPYEAF) is TAD2. The segment at residues 174-257 (LRLYQFLLGL…VKRKLTYQFD (84 aa)) is a DNA-binding region (ETS).

It belongs to the ETS family. Can form homotypic interactions. Interacts with IRF4/Pip. Interacts with JUN. Interacts with TBP. May also interact with CREBBP and EP300. Interacts with NONO/p54(nrb). As to expression, expressed in the medulla of the thymus, the spleen and germinal centers of the lymph nodes. Expressed in B-cells and T-cells, expression increases during B-cell maturation and decreases during T-cell maturation.

It localises to the nucleus. Sequence specific transcriptional activator which binds to the PU-box, a purine-rich DNA sequence (5'-GAGGAA-3') that can act as a lymphoid-specific enhancer. Promotes development of plasmacytoid dendritic cells (pDCs), also known as type 2 DC precursors (pre-DC2) or natural interferon (IFN)-producing cells. These cells have the capacity to produce large amounts of interferon and block viral replication. Required for B-cell receptor (BCR) signaling, which is necessary for normal B-cell development and antigenic stimulation. The polypeptide is Transcription factor Spi-B (Spib) (Mus musculus (Mouse)).